A 633-amino-acid polypeptide reads, in one-letter code: Electron transfer flavoprotein-ubiquinone oxidoreductase, mitochondrial (633 aa).

Residues M1 to S90 constitute a mitochondrion transit peptide. Residue V102 to I116 participates in FAD binding. Residues V140–H161 lie within the membrane without spanning it. The a ubiquinone site is built by G334 and G335. Residues I401–V421 lie within the membrane without spanning it. [4Fe-4S] cluster-binding residues include C578, C602, C605, and C608. The region spanning P593–P622 is the 4Fe-4S ferredoxin-type domain.

This sequence belongs to the ETF-QO/FixC family. The cofactor is [4Fe-4S] cluster. FAD is required as a cofactor.

It is found in the mitochondrion inner membrane. It carries out the reaction a ubiquinone + reduced [electron-transfer flavoprotein] = a ubiquinol + oxidized [electron-transfer flavoprotein] + H(+). Up-regulated by KIN10, by S1-bZIP specific dimers, and also by C/S1 bZIP heterodimers. Its function is as follows. Accepts electrons from ETF and reduces ubiquinone. May act downstream of IVD and D2HGDH in the degradation of phytol or chlorophyll during dark-induced senescence and sugar starvation. This Arabidopsis thaliana (Mouse-ear cress) protein is Electron transfer flavoprotein-ubiquinone oxidoreductase, mitochondrial (ETFQO).